The sequence spans 475 residues: Aminodeoxychorismate synthase component 1 (475 aa).

This sequence belongs to the anthranilate synthase component I family. In terms of assembly, monomer. Heterodimer consisting of two non-identical subunits: a glutamine amidotransferase subunit (PabA) and a aminodeoxychorismate synthase subunit (PabB). Requires Mg(2+) as cofactor.

It catalyses the reaction chorismate + L-glutamine = 4-amino-4-deoxychorismate + L-glutamate. It participates in cofactor biosynthesis; tetrahydrofolate biosynthesis; 4-aminobenzoate from chorismate: step 1/2. Functionally, part of a heterodimeric complex that catalyzes the two-step biosynthesis of 4-amino-4-deoxychorismate (ADC), a precursor of p-aminobenzoate (PABA) and tetrahydrofolate. In the first step, a glutamine amidotransferase (PabA) generates ammonia as a substrate that, along with chorismate, is used in the second step, catalyzed by aminodeoxychorismate synthase (PabB) to produce ADC. This chain is Aminodeoxychorismate synthase component 1 (pabB), found in Streptomyces lividans.